The chain runs to 547 residues: Chaperonin GroEL 1 (547 aa).

Residues 30-33, Lys51, 87-91, Gly415, and Asp496 each bind ATP; these read TLGP and DGTTT. The segment at 525–547 is disordered; sequence KPEPKSPAGGPGMGGMGGMDGMM. Residues 533-547 show a composition bias toward gly residues; sequence GGPGMGGMGGMDGMM.

This sequence belongs to the chaperonin (HSP60) family. In terms of assembly, forms a cylinder of 14 subunits composed of two heptameric rings stacked back-to-back. Interacts with the co-chaperonin GroES.

The protein resides in the cytoplasm. It catalyses the reaction ATP + H2O + a folded polypeptide = ADP + phosphate + an unfolded polypeptide.. Functionally, together with its co-chaperonin GroES, plays an essential role in assisting protein folding. The GroEL-GroES system forms a nano-cage that allows encapsulation of the non-native substrate proteins and provides a physical environment optimized to promote and accelerate protein folding. The sequence is that of Chaperonin GroEL 1 from Cereibacter sphaeroides (strain ATCC 17023 / DSM 158 / JCM 6121 / CCUG 31486 / LMG 2827 / NBRC 12203 / NCIMB 8253 / ATH 2.4.1.) (Rhodobacter sphaeroides).